The following is a 336-amino-acid chain: MNIATELFVVTFKIIWSFVLAGAKWFIRPREKSVEGQVCVITGAGSGLGRLFALEFARRRATLVLWDINRQSNEETAEMAREIYRQLKPSTGSSDSVQELPLLQPKVYTYMCDVSKRESVYLTAEKVRSEVGDIDLLINNAGVVSGRHLLDCPDELIERTMMVNCHAHFWTTKAFLPKMLELNHGHIVTVASSLGLFTTAGVEDYCASKFGAIGFHESLSHELKAADKDGIKMTLVCPFLVDTGMFEGCKIRKEMAPFFPPLKPEYCVKQAMRAILTDQPMICTPRVMYMVTFMKTVLPFDAIVCMYKFIGADKCMYPFLAQRKESTNNNESKTGI.

Residues 7–27 (LFVVTFKIIWSFVLAGAKWFI) form a helical; Signal-anchor membrane-spanning segment. 40 to 64 (VITGAGSGLGRLFALEFARRRATLV) contacts NADP(+). A substrate-binding site is contributed by S192. Y205 functions as the Proton acceptor in the catalytic mechanism.

This sequence belongs to the short-chain dehydrogenases/reductases (SDR) family.

It localises to the microsome membrane. It is found in the endoplasmic reticulum membrane. The enzyme catalyses all-trans-retinol + NADP(+) = all-trans-retinal + NADPH + H(+). Its pathway is cofactor metabolism; retinol metabolism. Its function is as follows. Retinol dehydrogenase with a clear preference for NADP. Converts all-trans-retinol to all-trans-retinal. Has no detectable activity towards 11-cis-retinol, 9-cis-retinol and 13-cis-retinol. This Danio rerio (Zebrafish) protein is Retinol dehydrogenase 10-B (rdh10b).